A 152-amino-acid chain; its full sequence is Xanthine-guanine phosphoribosyltransferase (152 aa).

5-phospho-alpha-D-ribose 1-diphosphate contacts are provided by residues 37–38, Arg-69, and 88–96; these read RG and DDLVDTGGT. Residue Arg-69 coordinates GMP. Asp-89 is a Mg(2+) binding site. The guanine site is built by Asp-92 and Ile-135. Positions 92 and 135 each coordinate xanthine. GMP-binding positions include 92–96 and 134–135; these read DTGGT and WI.

Belongs to the purine/pyrimidine phosphoribosyltransferase family. XGPT subfamily. As to quaternary structure, homotetramer. The cofactor is Mg(2+).

The protein localises to the cell inner membrane. The catalysed reaction is GMP + diphosphate = guanine + 5-phospho-alpha-D-ribose 1-diphosphate. It carries out the reaction XMP + diphosphate = xanthine + 5-phospho-alpha-D-ribose 1-diphosphate. It catalyses the reaction IMP + diphosphate = hypoxanthine + 5-phospho-alpha-D-ribose 1-diphosphate. It functions in the pathway purine metabolism; GMP biosynthesis via salvage pathway; GMP from guanine: step 1/1. It participates in purine metabolism; XMP biosynthesis via salvage pathway; XMP from xanthine: step 1/1. Functionally, purine salvage pathway enzyme that catalyzes the transfer of the ribosyl-5-phosphate group from 5-phospho-alpha-D-ribose 1-diphosphate (PRPP) to the N9 position of the 6-oxopurines guanine and xanthine to form the corresponding ribonucleotides GMP (guanosine 5'-monophosphate) and XMP (xanthosine 5'-monophosphate), with the release of PPi. To a lesser extent, also acts on hypoxanthine. This Escherichia coli O7:K1 (strain IAI39 / ExPEC) protein is Xanthine-guanine phosphoribosyltransferase.